We begin with the raw amino-acid sequence, 60 residues long: Ferredoxin-1 (60 aa).

4Fe-4S ferredoxin-type domains lie at 2-27 and 28-60; these read LYIT…SAGD and DIYV…IVQG. [4Fe-4S] cluster-binding residues include Cys-8, Cys-11, Cys-14, Cys-18, Cys-37, Cys-40, Cys-48, and Cys-52.

[4Fe-4S] cluster is required as a cofactor.

Its function is as follows. Ferredoxins are iron-sulfur proteins that transfer electrons in a wide variety of metabolic reactions. The polypeptide is Ferredoxin-1 (Chlorobium limicola).